The sequence spans 338 residues: Phenylalanine--tRNA ligase alpha subunit (338 aa).

Glu-259 serves as a coordination point for Mg(2+).

Belongs to the class-II aminoacyl-tRNA synthetase family. Phe-tRNA synthetase alpha subunit type 1 subfamily. As to quaternary structure, tetramer of two alpha and two beta subunits. Requires Mg(2+) as cofactor.

The protein localises to the cytoplasm. The catalysed reaction is tRNA(Phe) + L-phenylalanine + ATP = L-phenylalanyl-tRNA(Phe) + AMP + diphosphate + H(+). The sequence is that of Phenylalanine--tRNA ligase alpha subunit from Janthinobacterium sp. (strain Marseille) (Minibacterium massiliensis).